Reading from the N-terminus, the 368-residue chain is Protein mab-21-like (368 aa).

This sequence belongs to the mab-21 family.

This chain is Protein mab-21-like, found in Drosophila pseudoobscura pseudoobscura (Fruit fly).